We begin with the raw amino-acid sequence, 1888 residues long: Eukaryotic translation initiation factor 4G (1888 aa).

Disordered stretches follow at residues 1–259 (MSFN…PTTP), 391–420 (FDNK…TQPL), 449–662 (PLPS…SLQH), 726–761 (VAHS…KNSE), 838–903 (ADVS…DGEV), 961–1042 (AYKR…SGDR), 1083–1138 (TNVS…DPRL), 1331–1356 (GERE…EREE), 1462–1605 (KWQQ…PGDL), and 1639–1691 (RFAG…PSLP). Composition is skewed to polar residues over residues 13–36 (GYTQ…SGTH) and 75–84 (VNSTDSSNAP). Over residues 171–183 (DEQKRDQARHESF) the composition is skewed to basic and acidic residues. The span at 185-195 (PVPPMPIPLAP) shows a compositional bias: pro residues. 4 stretches are compositionally biased toward polar residues: residues 211–231 (NVGQ…NTGD), 244–259 (ASPN…PTTP), 393–405 (NKQS…TGTS), and 458–475 (NSQP…SQNV). Positions 497-506 (PNREHTRDTH) are enriched in basic and acidic residues. Over residues 586–596 (IKSSPVISKQF) the composition is skewed to polar residues. Over residues 603–630 (VSLESQDSSSVQSSLTASSEESELAVAH) the composition is skewed to low complexity. The span at 631–645 (SEVRRENLLGSDLHK) shows a compositional bias: basic and acidic residues. The span at 840–850 (VSASVSSSSTV) shows a compositional bias: low complexity. The segment covering 869–885 (NMSSNEVLKNVVKSDQP) has biased composition (polar residues). Over residues 963-983 (KRPEEKKETVAHSESIERTES) the composition is skewed to basic and acidic residues. An EIF4E-binding region spans residues 1048 to 1093 (KKYSRDFLLKFAEQFLDLPHNFEVTSDIESLMSTHTNVSHHHDRDP). Basic and acidic residues predominate over residues 1109-1124 (RLDRRGSNLVDDDRWS). Residues 1239–1462 (QRQLKAILNK…KDAIDLRKNK (224 aa)) form the MIF4G domain. Composition is skewed to basic and acidic residues over residues 1467–1484 (RKVE…DAAQ) and 1661–1674 (KDLR…DRSR). The MI domain occupies 1700–1824 (RLQQLSLTAI…SLREVADLIC (125 aa)).

Belongs to the eukaryotic initiation factor 4G family. EIF4F is a multi-subunit complex, the composition of which varies with external and internal environmental conditions. It is composed of at least EIF4A, EIF4E and EIF4G. Interacts directly with eIF4E. In higher plants two isoforms of EIF4F have been identified, named isoform EIF4F and isoform EIF(iso)4F. Isoform EIF4F has subunits p220 and p26, whereas isoform EIF(iso)4F has subunits p82 and p28.

Component of the protein complex eIF4F, which is involved in the recognition of the mRNA cap, ATP-dependent unwinding of 5'-terminal secondary structure and recruitment of mRNA to the ribosome. This Cucumis melo (Muskmelon) protein is Eukaryotic translation initiation factor 4G.